A 315-amino-acid polypeptide reads, in one-letter code: MGFGQVVIGPPGSGKTVYCNGMSQFLQSIGRKVSIINLDPSNENIPYEPAVNIQELIDFQTVVNETDLGPNGGLIFCMEYLEKNLDWLKEKLLPLKDHYIIFDCPGQVELYTHYKIISNILDNIMKWSFRLTVIQVFDSFYCKNPSNFISILLVSLSGMVRIELPHINVLSKMDLIEQNGPLDFNLDFYTDVLDLKYLDAFLDKDPRLKKYSKLNKAIAGVIEDFSLVSFIPLNIMDKKSVANLIASIDKSNGYIYGSLDTNTAILEIQERETQWNFDKYQETQEKYYKSYEDDDVIFENDQDEDYDEFSKYLNR.

12-17 (GSGKTV) contributes to the GTP binding site. A Gly-Pro-Asn (GPN)-loop; involved in dimer interface motif is present at residues 69-71 (GPN). 171-174 (SKMD) contacts GTP.

This sequence belongs to the GPN-loop GTPase family. As to quaternary structure, heterodimers with gpn1 or gpn3. Binds to RNA polymerase II (RNAPII).

In terms of biological role, small GTPase required for proper localization of RNA polymerase II and III (RNAPII and RNAPIII). May act at an RNAP assembly step prior to nuclear import. The polypeptide is GPN-loop GTPase 2 homolog (gpn2) (Dictyostelium discoideum (Social amoeba)).